Here is a 203-residue protein sequence, read N- to C-terminus: Small ribosomal subunit protein uS4 (203 aa).

Residues 20-45 (LPGLTRKRPKNTNPPGMHGAERKKKS) are disordered. An S4 RNA-binding domain is found at 92–155 (MRLDCIVFRL…SSRKLVAAYA (64 aa)).

Belongs to the universal ribosomal protein uS4 family. As to quaternary structure, part of the 30S ribosomal subunit. Contacts protein S5. The interaction surface between S4 and S5 is involved in control of translational fidelity.

Its function is as follows. One of the primary rRNA binding proteins, it binds directly to 16S rRNA where it nucleates assembly of the body of the 30S subunit. Functionally, with S5 and S12 plays an important role in translational accuracy. In Synechococcus sp. (strain JA-3-3Ab) (Cyanobacteria bacterium Yellowstone A-Prime), this protein is Small ribosomal subunit protein uS4.